Consider the following 186-residue polypeptide: A-type ATP synthase subunit E (186 aa).

This sequence belongs to the V-ATPase E subunit family. Has multiple subunits with at least A(3), B(3), C, D, E, F, H, I and proteolipid K(x).

Its subcellular location is the cell membrane. Functionally, component of the A-type ATP synthase that produces ATP from ADP in the presence of a proton gradient across the membrane. The chain is A-type ATP synthase subunit E from Methanocella arvoryzae (strain DSM 22066 / NBRC 105507 / MRE50).